The primary structure comprises 279 residues: Sulfur carrier protein FdhD (279 aa).

Residue Cys122 is the Cysteine persulfide intermediate of the active site.

It belongs to the FdhD family.

The protein resides in the cytoplasm. Required for formate dehydrogenase (FDH) activity. Acts as a sulfur carrier protein that transfers sulfur from IscS to the molybdenum cofactor prior to its insertion into FDH. The sequence is that of Sulfur carrier protein FdhD from Thermoplasma volcanium (strain ATCC 51530 / DSM 4299 / JCM 9571 / NBRC 15438 / GSS1).